Reading from the N-terminus, the 298-residue chain is MKVVLFYDQGRAHSVAAICEVLCAQGCAVTPHAIEQVWNDTSPCSTPLALVQDATHVFFLYAHEPMRDPAFIFFSGVACGRGMHVLLLATTTEVRDIHVFRDLVFLLEEETFEDFFRVEHERFVRQKKKRVARTALLERGYPCFEENFIATVMDGNIDIVNLFLDAGFSAALKDARGTPVLSLAVREGQDEMAAQLIARGAPVDQLSDDRAYSALMEAAQIGNRTVARLLLHAGADPNVRGSNGQTALVLAVGRKDHVLIRLLMDHGANPYLEDKLGLSAQGYAKLFNDPTLCTLVGV.

ANK repeat units lie at residues 143-172, 176-205, 210-239, and 243-272; these read CFEE…SAAL, RGTP…PVDQ, RAYS…DPNV, and NGQT…NPYL.

This chain is Putative ankyrin repeat-containing protein TP_0502, found in Treponema pallidum (strain Nichols).